The chain runs to 81 residues: MHKVQSLQDPFLNVLRRERVPVFIYLINGIKLQGEIESFDKFVILLRNTVNQMIYKHAISTIVPSRVVSYYVGRAGNHTTF.

The Sm domain maps to 9-68 (DPFLNVLRRERVPVFIYLINGIKLQGEIESFDKFVILLRNTVNQMIYKHAISTIVPSRVV).

This sequence belongs to the Hfq family. Homohexamer.

Functionally, RNA chaperone that binds small regulatory RNA (sRNAs) and mRNAs to facilitate mRNA translational regulation in response to envelope stress, environmental stress and changes in metabolite concentrations. Also binds with high specificity to tRNAs. The sequence is that of RNA-binding protein Hfq from Blochmanniella pennsylvanica (strain BPEN).